The chain runs to 159 residues: Putative ribosomal RNA large subunit methyltransferase H (159 aa).

Residues Leu-76, Gly-108, and 127 to 132 contribute to the S-adenosyl-L-methionine site; that span reads LSAMTF.

Belongs to the RNA methyltransferase RlmH family.

The protein resides in the cytoplasm. It catalyses the reaction pseudouridine(1915) in 23S rRNA + S-adenosyl-L-methionine = N(3)-methylpseudouridine(1915) in 23S rRNA + S-adenosyl-L-homocysteine + H(+). Specifically methylates the pseudouridine at position 1915 (m3Psi1915) in 23S rRNA. The protein is Putative ribosomal RNA large subunit methyltransferase H of Methanospirillum hungatei JF-1 (strain ATCC 27890 / DSM 864 / NBRC 100397 / JF-1).